We begin with the raw amino-acid sequence, 777 residues long: DISP complex protein LRCH3 (777 aa).

LRR repeat units follow at residues 56–79 (AAVTGVLSLSGRKLREFPRGAANH), 81–104 (LTDTTRADLSRNRLSEIPIEACHF), 105–127 (VSLENLNLYQNCIRYIPEAILNL), 128–150 (QALTFLNISRNQLSTLPVHLCNL), 152–172 (LKVLIASNNKLVSLPEEIGHL), 173–195 (RHLMELDVSCNEIQTIPSQIGNL), 196–218 (EALRDLNVRRNHLVHLPEELAEL), 220–239 (LIRLDFSCNKITTIPVCYRN), 240–264 (LRHLQTITLDNNPLQSPPAQICIKG), and 266–290 (VHIFKYLNIQACKIAPDLPDYDRRP). A mediates interaction with DOCK7 region spans residues 56 to 290 (AAVTGVLSLS…PDLPDYDRRP (235 aa)). Residues S324, S415, and S419 each carry the phosphoserine modification. The tract at residues 382-648 (TAEEEEAEVR…DSTDSITGQN (267 aa)) is mediates direct interaction with MYO6. Residues 568–590 (FTPLKSDDRPNALLSSPATETVH) form a disordered region. A phosphoserine mark is found at S611 and S628. The disordered stretch occupies residues 621 to 653 (ETNKGHASPLPPSAAPTTDSTDSITGQNSRQRE). A compositionally biased stretch (low complexity) spans 635–645 (APTTDSTDSIT). The Calponin-homology (CH) domain occupies 652–765 (REEELELIDQ…VTVQALLELA (114 aa)).

Component of the DOCK7-induced septin displacement/DISP complex, at least composed of DOCK7, LRCH3 and MYO6.

The protein localises to the cytoplasm. As part of the DISP complex, may regulate the association of septins with actin and thereby regulate the actin cytoskeleton. The protein is DISP complex protein LRCH3 of Homo sapiens (Human).